A 175-amino-acid polypeptide reads, in one-letter code: Phosphatidylglycerol/phosphatidylinositol transfer protein (175 aa).

The N-terminal stretch at 1-21 (MKFLSTAAALLVCLAPVSTTA) is a signal peptide. Positions 22 to 37 (RSLDFFKSSQSPIQAQ) are excised as a propeptide.

This sequence belongs to the NPC2 family. In terms of assembly, monomer.

It localises to the cytoplasm. Its subcellular location is the cytoplasmic vesicle. It is found in the golgi apparatus. Its function is as follows. Catalyzes the intermembrane transfer of phosphatidylglycerol and phosphatidylinositol. The sequence is that of Phosphatidylglycerol/phosphatidylinositol transfer protein (pltp) from Aspergillus oryzae (strain ATCC 42149 / RIB 40) (Yellow koji mold).